Reading from the N-terminus, the 156-residue chain is Riboflavin synthase (156 aa).

This sequence belongs to the DMRL synthase family.

The enzyme catalyses 2 6,7-dimethyl-8-(1-D-ribityl)lumazine + H(+) = 5-amino-6-(D-ribitylamino)uracil + riboflavin. Its pathway is cofactor biosynthesis; riboflavin biosynthesis; riboflavin from 2-hydroxy-3-oxobutyl phosphate and 5-amino-6-(D-ribitylamino)uracil: step 2/2. In Methanocaldococcus jannaschii (strain ATCC 43067 / DSM 2661 / JAL-1 / JCM 10045 / NBRC 100440) (Methanococcus jannaschii), this protein is Riboflavin synthase (ribC).